The following is a 424-amino-acid chain: UDP-N-acetylglucosamine 1-carboxyvinyltransferase (424 aa).

A phosphoenolpyruvate-binding site is contributed by 22-23 (KN). Position 98 (arginine 98) interacts with UDP-N-acetyl-alpha-D-glucosamine. Cysteine 122 serves as the catalytic Proton donor. Residue cysteine 122 is modified to 2-(S-cysteinyl)pyruvic acid O-phosphothioketal. UDP-N-acetyl-alpha-D-glucosamine is bound by residues 127–131 (RPVDQ), aspartate 312, and isoleucine 334.

This sequence belongs to the EPSP synthase family. MurA subfamily.

It localises to the cytoplasm. The catalysed reaction is phosphoenolpyruvate + UDP-N-acetyl-alpha-D-glucosamine = UDP-N-acetyl-3-O-(1-carboxyvinyl)-alpha-D-glucosamine + phosphate. It participates in cell wall biogenesis; peptidoglycan biosynthesis. Its function is as follows. Cell wall formation. Adds enolpyruvyl to UDP-N-acetylglucosamine. This is UDP-N-acetylglucosamine 1-carboxyvinyltransferase from Xanthomonas euvesicatoria pv. vesicatoria (strain 85-10) (Xanthomonas campestris pv. vesicatoria).